The chain runs to 195 residues: Pyridoxal 5'-phosphate synthase subunit PdxT (195 aa).

46-48 (GES) is a binding site for L-glutamine. The active-site Nucleophile is the cysteine 78. L-glutamine contacts are provided by residues arginine 105 and 133–134 (IR). Residues histidine 169 and glutamate 171 each act as charge relay system in the active site.

This sequence belongs to the glutaminase PdxT/SNO family. In terms of assembly, in the presence of PdxS, forms a dodecamer of heterodimers. Only shows activity in the heterodimer.

The catalysed reaction is aldehydo-D-ribose 5-phosphate + D-glyceraldehyde 3-phosphate + L-glutamine = pyridoxal 5'-phosphate + L-glutamate + phosphate + 3 H2O + H(+). The enzyme catalyses L-glutamine + H2O = L-glutamate + NH4(+). The protein operates within cofactor biosynthesis; pyridoxal 5'-phosphate biosynthesis. Catalyzes the hydrolysis of glutamine to glutamate and ammonia as part of the biosynthesis of pyridoxal 5'-phosphate. The resulting ammonia molecule is channeled to the active site of PdxS. This Geobacillus thermodenitrificans (strain NG80-2) protein is Pyridoxal 5'-phosphate synthase subunit PdxT.